The primary structure comprises 241 residues: Neuroendocrine secretory protein 55 (241 aa).

A signal peptide spans 1-46 (MDRRSRPQLGRRARHNYNDLCPPIGRRAATALLWLSCSIALLRALA). The disordered stretch occupies residues 71-241 (AAQVFPEPPE…KRGAIPIRRH (171 aa)). Positions 97 to 125 (EYQEEEFDYESETESESEIESETEFETES) are enriched in acidic residues. Residues 167 to 177 (PDASPSRAPPS) show a composition bias toward low complexity. A compositionally biased stretch (basic and acidic residues) spans 182 to 198 (ESPRQGEEPEDKDPRDP). A compositionally biased stretch (basic residues) spans 212 to 221 (QHRCKPKKPT).

It belongs to the NESP55 family. In terms of processing, binds keratan sulfate chains. May be proteolytically processed to give rise to a number of active peptides. In terms of tissue distribution, highly expressed in adrenal medulla and anterior and posterior pituitary. In the brain, detected in hypothalamus, hippocampus, caudate nucleus, thalamus and, in significantly lower amounts, in the cerebellum.

The protein localises to the cytoplasmic vesicle. The protein resides in the secretory vesicle. Its subcellular location is the secreted. In Bos taurus (Bovine), this protein is Neuroendocrine secretory protein 55.